The following is a 125-amino-acid chain: Protein ApaG (125 aa).

The ApaG domain maps to 1 to 125; it reads MINAPRVCVQ…FRLAIPSLIH (125 aa).

This is Protein ApaG from Pectobacterium carotovorum subsp. carotovorum (strain PC1).